The primary structure comprises 557 residues: Membrane protein insertase YidC (557 aa).

The next 5 helical transmembrane spans lie at 3–23, 363–383, 437–457, 476–496, and 507–527; these read IKRT…FDNW, FVGN…AVFF, LPVV…LASV, PYFI…KLNP, and MMFM…GLVL.

This sequence belongs to the OXA1/ALB3/YidC family. Type 1 subfamily. In terms of assembly, interacts with the Sec translocase complex via SecD. Specifically interacts with transmembrane segments of nascent integral membrane proteins during membrane integration.

Its subcellular location is the cell inner membrane. Required for the insertion and/or proper folding and/or complex formation of integral membrane proteins into the membrane. Involved in integration of membrane proteins that insert both dependently and independently of the Sec translocase complex, as well as at least some lipoproteins. Aids folding of multispanning membrane proteins. The polypeptide is Membrane protein insertase YidC (Burkholderia thailandensis (strain ATCC 700388 / DSM 13276 / CCUG 48851 / CIP 106301 / E264)).